The chain runs to 68 residues: Large ribosomal subunit protein bL35 (68 aa).

It belongs to the bacterial ribosomal protein bL35 family.

The polypeptide is Large ribosomal subunit protein bL35 (Orientia tsutsugamushi (strain Boryong) (Rickettsia tsutsugamushi)).